The chain runs to 871 residues: Pentatricopeptide repeat-containing protein DOT4, chloroplastic (871 aa).

Residues 1-28 constitute a chloroplast transit peptide; the sequence is MAMLVTNLSSSSFCFFSSPHLQNQKEIR. PPR repeat units follow at residues 60–94, 96–127, 128–158, 159–193, 194–228, 229–259, 260–294, 295–329, 330–360, 361–395, 396–430, 431–465, 466–497, 498–532, 533–563, 564–598, 599–629, and 635–665; these read SVTD…DIDP, TLCS…GFVI, DSNL…VKIE, KALF…GVEM, DSYT…GFGE, RNSV…MTER, DVIS…GIEI, DLAT…CFSR, EDRF…MSDR, SVVS…GISP, DVYT…DLGF, DIFV…DIIS, WNTI…RFSP, DERT…GYFS, DRHV…IASK, DLVS…GIEA, DEIS…MRHE, and TVEH…MPIP. The segment at 670–745 is type E motif; that stretch reads IWGALLCGCR…NPGCSWIEIK (76 aa). The interval 746-776 is type E(+) motif; the sequence is GRVNIFVAGDSSNPETENIEAFLRKVRARMI. The tract at residues 777–871 is type DYW motif; the sequence is EEGYSPLTKY…DGHCSCRGFW (95 aa).

It belongs to the PPR family. PCMP-H subfamily. Requires Zn(2+) as cofactor. As to expression, weakly expressed in leaves.

The protein localises to the plastid. It is found in the chloroplast. Functionally, plays a major role in single RNA editing events in chloroplasts. Acts as a site-recognition transacting factor involved in the edition of the unique site (corresponding to cytidine-488) of rpoC1, which is a plastid-encoded subunit of the chloroplast DNA-directed RNA polymerase. May provide the catalytic activity for editing site conversion. Involved in leaf vasculature patterning. The chain is Pentatricopeptide repeat-containing protein DOT4, chloroplastic from Arabidopsis thaliana (Mouse-ear cress).